We begin with the raw amino-acid sequence, 173 residues long: Photosystem I assembly protein Ycf3 (173 aa).

3 TPR repeats span residues 35–68 (AYIYYRDGLAAQNNGDYSEALEYYKESLLLEENK), 72–105 (GETLKNMAIIYMSNGEEDLSIETYEKALVENPKQ), and 120–153 (GRNAEQNGDLDQRDIWFDKAAEVWSKAVRLYPGG).

It belongs to the Ycf3 family.

It localises to the cellular thylakoid membrane. Its function is as follows. Essential for the assembly of the photosystem I (PSI) complex. May act as a chaperone-like factor to guide the assembly of the PSI subunits. The polypeptide is Photosystem I assembly protein Ycf3 (Prochlorococcus marinus (strain MIT 9301)).